The sequence spans 114 residues: Histone H3-5 (114 aa).

Residues 1–29 (NTGAKAPRKQLANKAARKSTNVNAVSGVK) are disordered.

The protein belongs to the histone H3 family. The nucleosome is a histone octamer containing two molecules each of H2A, H2B, H3 and H4 assembled in one H3-H4 heterotetramer and two H2A-H2B heterodimers. The octamer wraps approximately 147 bp of DNA.

It localises to the nucleus. The protein localises to the chromosome. Functionally, core component of nucleosome. Nucleosomes wrap and compact DNA into chromatin, limiting DNA accessibility to the cellular machineries which require DNA as a template. Histones thereby play a central role in transcription regulation, DNA repair, DNA replication and chromosomal stability. DNA accessibility is regulated via a complex set of post-translational modifications of histones, also called histone code, and nucleosome remodeling. The sequence is that of Histone H3-5 (H3-5) from Stylonychia lemnae (Ciliate).